The chain runs to 360 residues: Isopentenyl-diphosphate delta-isomerase (360 aa).

12–13 provides a ligand contact to substrate; sequence RK. Residues 69 to 71, Ser99, and Asn130 each bind FMN; that span reads SMT. 99 to 101 is a substrate binding site; the sequence is SQR. A substrate-binding site is contributed by Gln164. Glu165 contacts Mg(2+). FMN is bound by residues Lys196, Thr226, 277 to 279, and 298 to 299; these read GVR and AK.

The protein belongs to the IPP isomerase type 2 family. Homooctamer. Dimer of tetramers. FMN is required as a cofactor. The cofactor is NADPH. It depends on Mg(2+) as a cofactor.

It localises to the cytoplasm. It catalyses the reaction isopentenyl diphosphate = dimethylallyl diphosphate. Its function is as follows. Involved in the biosynthesis of isoprenoids. Catalyzes the 1,3-allylic rearrangement of the homoallylic substrate isopentenyl (IPP) to its allylic isomer, dimethylallyl diphosphate (DMAPP). This Halobacterium salinarum (strain ATCC 700922 / JCM 11081 / NRC-1) (Halobacterium halobium) protein is Isopentenyl-diphosphate delta-isomerase.